Reading from the N-terminus, the 235-residue chain is MDKIRTVSDTKRDFYNHHTRPINSIYRRFIEELLVEMHLLCVNIDFRYDPIYALGVVASFQQFMQGYRPEEDKNSIFSALCQAVGGDGEKYRHEAQTLLNQVKGMSVSDLIAMGNSARTGEPGEGMLYNTLQAIAKNPQFKYSRLFAIGLYTMVMEIDADLLKEQDKRNETFSQLCNGLNLSSDKLQKDLDLYRSNVDKMGQLLAVIEDALEAERKKREKAKQEVATTPEDSPAN.

Residues 179 to 228 (LNLSSDKLQKDLDLYRSNVDKMGQLLAVIEDALEAERKKREKAKQEVATT) adopt a coiled-coil conformation.

It belongs to the THF1 family.

May be involved in photosynthetic membrane biogenesis. In Rippkaea orientalis (strain PCC 8801 / RF-1) (Cyanothece sp. (strain PCC 8801)), this protein is Protein Thf1.